The primary structure comprises 254 residues: 5-oxoprolinase subunit A (254 aa).

Belongs to the LamB/PxpA family. As to quaternary structure, forms a complex composed of PxpA, PxpB and PxpC.

It catalyses the reaction 5-oxo-L-proline + ATP + 2 H2O = L-glutamate + ADP + phosphate + H(+). Its function is as follows. Catalyzes the cleavage of 5-oxoproline to form L-glutamate coupled to the hydrolysis of ATP to ADP and inorganic phosphate. This is 5-oxoprolinase subunit A from Acinetobacter baumannii (strain AB307-0294).